A 420-amino-acid polypeptide reads, in one-letter code: 4-hydroxy-3-methylbut-2-en-1-yl diphosphate synthase (flavodoxin) (420 aa).

[4Fe-4S] cluster-binding residues include Cys-307, Cys-310, Cys-353, and Glu-360.

The protein belongs to the IspG family. [4Fe-4S] cluster serves as cofactor.

The catalysed reaction is (2E)-4-hydroxy-3-methylbut-2-enyl diphosphate + oxidized [flavodoxin] + H2O + 2 H(+) = 2-C-methyl-D-erythritol 2,4-cyclic diphosphate + reduced [flavodoxin]. It participates in isoprenoid biosynthesis; isopentenyl diphosphate biosynthesis via DXP pathway; isopentenyl diphosphate from 1-deoxy-D-xylulose 5-phosphate: step 5/6. In terms of biological role, converts 2C-methyl-D-erythritol 2,4-cyclodiphosphate (ME-2,4cPP) into 1-hydroxy-2-methyl-2-(E)-butenyl 4-diphosphate. The polypeptide is 4-hydroxy-3-methylbut-2-en-1-yl diphosphate synthase (flavodoxin) (Brucella suis biovar 1 (strain 1330)).